Reading from the N-terminus, the 359-residue chain is tRNA-specific 2-thiouridylase MnmA (359 aa).

Residues 7-14 and Met33 contribute to the ATP site; that span reads AMSGGVDS. Cys101 serves as the catalytic Nucleophile. A disulfide bridge links Cys101 with Cys198. Gly125 provides a ligand contact to ATP. An interaction with tRNA region spans residues 148-150; sequence KDQ. Catalysis depends on Cys198, which acts as the Cysteine persulfide intermediate.

It belongs to the MnmA/TRMU family.

Its subcellular location is the cytoplasm. The catalysed reaction is S-sulfanyl-L-cysteinyl-[protein] + uridine(34) in tRNA + AH2 + ATP = 2-thiouridine(34) in tRNA + L-cysteinyl-[protein] + A + AMP + diphosphate + H(+). Functionally, catalyzes the 2-thiolation of uridine at the wobble position (U34) of tRNA, leading to the formation of s(2)U34. The sequence is that of tRNA-specific 2-thiouridylase MnmA from Chloroflexus aggregans (strain MD-66 / DSM 9485).